A 148-amino-acid chain; its full sequence is UPF0134 protein MPN_410 (148 aa).

This sequence belongs to the UPF0134 family.

This is UPF0134 protein MPN_410 from Mycoplasma pneumoniae (strain ATCC 29342 / M129 / Subtype 1) (Mycoplasmoides pneumoniae).